We begin with the raw amino-acid sequence, 435 residues long: Maltodextrin transport system permease protein MalC (435 aa).

The next 10 membrane-spanning stretches (helical) occupy residues 34–54, 73–93, 130–150, 199–219, 230–250, 263–283, 294–314, 338–358, 371–391, and 404–424; these read GFIF…LATP, FMLI…LFYF, YLLI…PVIV, IIWA…TAII, IFGV…ILTF, TQVL…LIPW, LIMM…LGIL, NITF…QYTF, GGGP…ISWI, and MAAA…MIAF. An ABC transmembrane type-1 domain is found at 195–423; sequence LSWTIIWALA…IIVISISMIA (229 aa).

This sequence belongs to the binding-protein-dependent transport system permease family. MalFG subfamily.

The protein resides in the cell membrane. In terms of biological role, part of the binding-protein-dependent transport system for maltodextrin; probably responsible for the translocation of the substrate across the membrane. In Streptococcus pneumoniae serotype 4 (strain ATCC BAA-334 / TIGR4), this protein is Maltodextrin transport system permease protein MalC (malC).